We begin with the raw amino-acid sequence, 301 residues long: Homoserine kinase (301 aa).

81–91 is a binding site for ATP; that stretch reads RPSSGLGSSAA.

The protein belongs to the GHMP kinase family. Homoserine kinase subfamily.

It localises to the cytoplasm. The enzyme catalyses L-homoserine + ATP = O-phospho-L-homoserine + ADP + H(+). It functions in the pathway amino-acid biosynthesis; L-threonine biosynthesis; L-threonine from L-aspartate: step 4/5. Its function is as follows. Catalyzes the ATP-dependent phosphorylation of L-homoserine to L-homoserine phosphate. This chain is Homoserine kinase, found in Halobacterium salinarum (strain ATCC 29341 / DSM 671 / R1).